A 488-amino-acid polypeptide reads, in one-letter code: MWESKFAKESLTFDDVLLIPAQSDILPKDVDLSVQLSDKAKLNIPVISAGMDTVTESKMAIAMARQGGLGVIHKNMGVEEQADEVQKVKRSENGVISNPFFLTPEESVYEAEALMGKYRISGVPIVDNKEDRNLVGILTNRDLRFIEDFSIKIVDVMTQENLITAPVNTTLEEAEKILQKHKIEKLPLVKDGRLEGLITIKDIEKVIEFPNAAKDEHGRLLVAAAIGISKDTDIRAQKLVEAGVDVLVIDTAHGHSKGVIDQVKHIKKTYPEITLVAGNVATAEATKDLFEAGADIVKVGIGPGSICTTRVVAGVGVPQITAIYDCATEARKHGKAIIADGGIKFSGDIIKALAAGGHAVMLGSLLAGTEESPGATEIFQGRQYKVYRGMGSLGAMEKGSNDRYFQEDKAPKKFVPEGIEGRTAYKGALQDTIYQLMGGVRAGMGYTGSHDLRELREEAQFTRMGPAGLAESHPHNIQITKESPNYSF.

2 consecutive CBS domains span residues 95 to 153 (VISN…SIKI) and 157 to 216 (MTQE…AKDE). NAD(+) is bound by residues Asp250 and 300 to 302 (GIG). K(+) contacts are provided by Gly302 and Gly304. Ser305 lines the IMP pocket. K(+) is bound at residue Cys307. Cys307 acts as the Thioimidate intermediate in catalysis. Residues 340 to 342 (DGG), 363 to 364 (GS), and 387 to 391 (YRGMG) contribute to the IMP site. Residue Arg403 is the Proton acceptor of the active site. Glu417 provides a ligand contact to IMP. Residues 468–488 (GLAESHPHNIQITKESPNYSF) are disordered. The K(+) site is built by Glu471, Ser472, and His473. The span at 475–488 (HNIQITKESPNYSF) shows a compositional bias: polar residues.

Belongs to the IMPDH/GMPR family. In terms of assembly, homotetramer. It depends on K(+) as a cofactor.

The catalysed reaction is IMP + NAD(+) + H2O = XMP + NADH + H(+). It functions in the pathway purine metabolism; XMP biosynthesis via de novo pathway; XMP from IMP: step 1/1. Mycophenolic acid (MPA) is a non-competitive inhibitor that prevents formation of the closed enzyme conformation by binding to the same site as the amobile flap. In contrast, mizoribine monophosphate (MZP) is a competitive inhibitor that induces the closed conformation. MPA is a potent inhibitor of mammalian IMPDHs but a poor inhibitor of the bacterial enzymes. MZP is a more potent inhibitor of bacterial IMPDH. Its function is as follows. Catalyzes the conversion of inosine 5'-phosphate (IMP) to xanthosine 5'-phosphate (XMP), the first committed and rate-limiting step in the de novo synthesis of guanine nucleotides, and therefore plays an important role in the regulation of cell growth. The chain is Inosine-5'-monophosphate dehydrogenase from Staphylococcus aureus (strain MW2).